We begin with the raw amino-acid sequence, 249 residues long: tRNA pseudouridine synthase A (249 aa).

Catalysis depends on D52, which acts as the Nucleophile. Y110 is a substrate binding site.

It belongs to the tRNA pseudouridine synthase TruA family. In terms of assembly, homodimer.

It carries out the reaction uridine(38/39/40) in tRNA = pseudouridine(38/39/40) in tRNA. Its function is as follows. Formation of pseudouridine at positions 38, 39 and 40 in the anticodon stem and loop of transfer RNAs. The polypeptide is tRNA pseudouridine synthase A (Syntrophomonas wolfei subsp. wolfei (strain DSM 2245B / Goettingen)).